The sequence spans 156 residues: Large ribosomal subunit protein bL9 (156 aa).

This sequence belongs to the bacterial ribosomal protein bL9 family.

Binds to the 23S rRNA. This Treponema pallidum (strain Nichols) protein is Large ribosomal subunit protein bL9.